Reading from the N-terminus, the 204-residue chain is Pyridoxal 5'-phosphate synthase subunit PdxT (204 aa).

52 to 54 (GES) contributes to the L-glutamine binding site. Cys-84 (nucleophile) is an active-site residue. Residues Arg-116 and 143–144 (IR) contribute to the L-glutamine site. Catalysis depends on charge relay system residues His-184 and Glu-186.

Belongs to the glutaminase PdxT/SNO family. In terms of assembly, in the presence of PdxS, forms a dodecamer of heterodimers. Only shows activity in the heterodimer.

The catalysed reaction is aldehydo-D-ribose 5-phosphate + D-glyceraldehyde 3-phosphate + L-glutamine = pyridoxal 5'-phosphate + L-glutamate + phosphate + 3 H2O + H(+). It catalyses the reaction L-glutamine + H2O = L-glutamate + NH4(+). Its pathway is cofactor biosynthesis; pyridoxal 5'-phosphate biosynthesis. Catalyzes the hydrolysis of glutamine to glutamate and ammonia as part of the biosynthesis of pyridoxal 5'-phosphate. The resulting ammonia molecule is channeled to the active site of PdxS. This chain is Pyridoxal 5'-phosphate synthase subunit PdxT, found in Pyrobaculum arsenaticum (strain DSM 13514 / JCM 11321 / PZ6).